The chain runs to 295 residues: MNGLVKNGNVEKPNKYFDIKDKRDFLYHFGFGVDTLDIPAVFGDTKFVCTGGSPGRFKLYAEWFAKEANIPCSENLSRSDRFVIYKTGPVCWINHGMGTPSLSIMLVESFKLMHHAGVKNPTFIRLGTSGGVGVPPGTVVVSTEAMNAELGDTYVQIIAGKRIERPTQLDAALREALCEVGKEKSIPVETGKTMCADDFYEGQMRLDGYFCDYEEEDKYAFLRKLNALGVRNIEMESTCFASFTCRAGFQSAIVCVTLLNRMDGDQVQIAKEQYIEYEERPFRLVTAYIRKQTGI.

Phosphate-binding positions include arginine 81 and 125–128 (RLGT). Substrate is bound by residues glutamine 203 and arginine 205.

This sequence belongs to the PNP/UDP phosphorylase family. Expressed in hypodermis, pharynx, spermatheca and gonad.

The catalysed reaction is uridine + phosphate = alpha-D-ribose 1-phosphate + uracil. The enzyme catalyses thymidine + phosphate = 2-deoxy-alpha-D-ribose 1-phosphate + thymine. It carries out the reaction 2'-deoxyuridine + phosphate = 2-deoxy-alpha-D-ribose 1-phosphate + uracil. It participates in pyrimidine metabolism; UMP biosynthesis via salvage pathway; uracil from uridine (phosphorylase route): step 1/1. The protein operates within pyrimidine metabolism; dTMP biosynthesis via salvage pathway; dTMP from thymine: step 1/2. Catalyzes the reversible phosphorylytic cleavage of uridine and thymidine to uracil and ribose-phosphate or thymine and deoxyribose-1-phosphate. The produced molecules are then utilized as carbon and energy sources or in the rescue of pyrimidine bases for nucleotide synthesis. Required for normal lifespan. The polypeptide is Uridine and thymidine phosphorylase (Caenorhabditis elegans).